The following is a 521-amino-acid chain: MAWIWISLLLPILIYFPGCFSESEEERLLNHIFVERGYRKELRPVEHTGETVNVSLALTLSNLISLKEADETLTTNVWVELAWYDKRLAWDMETYNNIDILRVPPDMVWQPQLILENNNNGVFEVAYYSNVLISSDGFMYWLPPAIFQTSCSINVNYFPFDWQNCSLKFSSLTYNAKEINLQLRQDLDEASQRYYPVEWIIIDPEGFTENGEWEIVHIPAKKNIDRSLSPESTKYQDITFYLIIERKPLFYIINILAPCVLIALMANLVFYLPADSGEKMTLAISVLLAQSVFLLLISQRLPETSFAIPLISKYLMFIMVLVTIVVVSCVIVLNLHFRTPSTHAISERMKEIFLNKLPRILHMSQPAEPEPEPWSGVLLRRSSSVGYIVKAEEYYSVKSRSELMFEKQSERHGLTSRATPARVNPLNANNSQDQLYGEIKPAIDGANFIVKHIRDKNDYNEEKDNWYRIARTVDRLCLFLVTPVMIIGTLWIFLGGAYNLPPSLPFPGDPFIYTKEHRRLI.

The first 21 residues, 1–21 (MAWIWISLLLPILIYFPGCFS), serve as a signal peptide directing secretion. The Extracellular segment spans residues 22 to 247 (ESEEERLLNH…ITFYLIIERK (226 aa)). Asparagine 53 and asparagine 164 each carry an N-linked (GlcNAc...) asparagine glycan. Cysteine 151 and cysteine 165 are disulfide-bonded. 3 helical membrane-spanning segments follow: residues 248–272 (PLFYIINILAPCVLIALMANLVFYL), 280–297 (MTLAISVLLAQSVFLLLI), and 314–335 (YLMFIMVLVTIVVVSCVIVLNL). The Cytoplasmic segment spans residues 336-475 (HFRTPSTHAI…WYRIARTVDR (140 aa)). Tyrosine 394 bears the Phosphotyrosine; by Tyr-kinases mark. The chain crosses the membrane as a helical span at residues 476 to 494 (LCLFLVTPVMIIGTLWIFL).

This sequence belongs to the ligand-gated ion channel (TC 1.A.9) family. Acetylcholine receptor (TC 1.A.9.1) subfamily. Pentamer of two alpha chains, and one each of the beta, delta, and gamma (in immature muscle) or epsilon (in mature muscle) chains.

It localises to the postsynaptic cell membrane. The protein localises to the cell membrane. The enzyme catalyses K(+)(in) = K(+)(out). The catalysed reaction is Na(+)(in) = Na(+)(out). Functionally, after binding acetylcholine, the AChR responds by an extensive change in conformation that affects all subunits and leads to opening of an ion-conducting channel across the plasma membrane. The polypeptide is Acetylcholine receptor subunit delta (chrnd) (Xenopus laevis (African clawed frog)).